The primary structure comprises 247 residues: V-type proton ATPase subunit D (247 aa).

The protein belongs to the V-ATPase D subunit family. As to quaternary structure, V-ATPase is a heteromultimeric enzyme made up of two complexes: the ATP-hydrolytic V1 complex and the proton translocation V0 complex. The V1 complex consists of three catalytic AB heterodimers that form a heterohexamer, three peripheral stalks each consisting of EG heterodimers, one central rotor including subunits D and F, and the regulatory subunits C and H. The proton translocation complex V0 consists of the proton transport subunit a, a ring of proteolipid subunits c9c'', rotary subunit d, subunits e and f, and the accessory subunits ATP6AP1/Ac45 and ATP6AP2/PRR. Interacts with SNX10.

The protein localises to the membrane. It is found in the cytoplasmic vesicle. It localises to the clathrin-coated vesicle membrane. Its subcellular location is the cytoplasm. The protein resides in the cytoskeleton. The protein localises to the microtubule organizing center. It is found in the centrosome. It localises to the cell projection. Its subcellular location is the cilium. Subunit of the V1 complex of vacuolar(H+)-ATPase (V-ATPase), a multisubunit enzyme composed of a peripheral complex (V1) that hydrolyzes ATP and a membrane integral complex (V0) that translocates protons. V-ATPase is responsible for acidifying and maintaining the pH of intracellular compartments and in some cell types, is targeted to the plasma membrane, where it is responsible for acidifying the extracellular environment. May play a role in cilium biogenesis through regulation of the transport and the localization of proteins to the cilium. The chain is V-type proton ATPase subunit D (Atp6v1d) from Mus musculus (Mouse).